The sequence spans 451 residues: AP-4 complex subunit mu (451 aa).

The region spanning 184–450 (REEIFVDIIE…VTQANSYVAR (267 aa)) is the MHD domain.

It belongs to the adaptor complexes medium subunit family. Adaptor protein complex 4 (AP-4) is a heterotetramer composed of two large adaptins (epsilon-type subunit and beta-type subunit), a medium adaptin (mu-type subunit) and a small adaptin (sigma-type subunit).

Its subcellular location is the golgi apparatus. It localises to the trans-Golgi network. It is found in the membrane. The protein localises to the coated pit. Functionally, subunit of novel type of clathrin- or non-clathrin-associated protein coat involved in targeting proteins from the trans-Golgi network (TGN) to the endosomal-lysosomal system. The sequence is that of AP-4 complex subunit mu (AP4M) from Arabidopsis thaliana (Mouse-ear cress).